Reading from the N-terminus, the 169-residue chain is Inorganic pyrophosphatase (169 aa).

An N-formylmethionine modification is found at methionine 1. Positions 28, 42, and 54 each coordinate substrate. Mg(2+) contacts are provided by aspartate 64, aspartate 69, and aspartate 101. Residue tyrosine 138 coordinates substrate.

This sequence belongs to the PPase family. In terms of assembly, homohexamer. The cofactor is Mg(2+).

It localises to the cytoplasm. It carries out the reaction diphosphate + H2O = 2 phosphate + H(+). With respect to regulation, inhibited by ATP, but not by fructose 1,6-bisphosphate or 2-phosphoglycerate. In terms of biological role, hydrolyzes PPi generated in anabolic reactions. Catalyzes the hydrolysis of inorganic pyrophosphate (PPi) forming two phosphate ions. The polypeptide is Inorganic pyrophosphatase (Synechocystis sp. (strain ATCC 27184 / PCC 6803 / Kazusa)).